We begin with the raw amino-acid sequence, 193 residues long: Bcl-2-binding component 3 (193 aa).

Disordered stretches follow at residues 1–31 and 71–131; these read MARA…GRLM and ALGG…VEEE. Serine 10 is modified (phosphoserine). The BH3 motif lies at 137-151; sequence IGAQLRRMADDLNAQ.

The protein belongs to the Bcl-2 family. Interacts with MCL1 and BCL2A1. Interacts with BCL2 and BCL2L1/BCL-XL. Interacts (via BH3 domain) with NOL3 (via CARD domain); this interaction prevents BBC3 association with BCL2 and results in CASP8 activation.

It localises to the mitochondrion. Its function is as follows. Essential mediator of p53/TP53-dependent and p53/TP53-independent apoptosis. Promotes partial unfolding of BCL2L1 and dissociation of BCL2L1 from p53/TP53, releasing the bound p53/TP53 to induce apoptosis. Regulates ER stress-induced neuronal apoptosis. In Mus musculus (Mouse), this protein is Bcl-2-binding component 3 (Bbc3).